A 553-amino-acid polypeptide reads, in one-letter code: Hydroxylamine reductase (553 aa).

4 residues coordinate [2Fe-2S] cluster: Cys-3, Cys-6, Cys-18, and Cys-25. Positions 249, 273, 317, 405, 433, 459, 493, and 495 each coordinate hybrid [4Fe-2O-2S] cluster. Residue Cys-405 is modified to Cysteine persulfide.

It belongs to the HCP family. [2Fe-2S] cluster serves as cofactor. Requires hybrid [4Fe-2O-2S] cluster as cofactor.

The protein localises to the cytoplasm. The catalysed reaction is A + NH4(+) + H2O = hydroxylamine + AH2 + H(+). Catalyzes the reduction of hydroxylamine to form NH(3) and H(2)O. The protein is Hydroxylamine reductase of Mannheimia succiniciproducens (strain KCTC 0769BP / MBEL55E).